The chain runs to 189 residues: MSGIFIAIILLTILALLFGILLGFAAEKFKVEGDPLVDQLEALLPQTQCGQCGYPGCRPYAEAIANGEKINLCPPGGSATMEKLAEMAGVEPEPLSATEEVQVKKVAYIREEECIGCTKCIQACPVDAILGSGKLMHTVITDYCTGCDLCVAPCPVDCIDMLPVEQTVKNWDWKLNAIPVKTLDEDCQC.

The segment at 1-26 is hydrophobic; sequence MSGIFIAIILLTILALLFGILLGFAA. The region spanning 32–90 is the 4Fe-4S domain; sequence EGDPLVDQLEALLPQTQCGQCGYPGCRPYAEAIANGEKINLCPPGGSATMEKLAEMAGV. 12 residues coordinate [4Fe-4S] cluster: Cys-49, Cys-52, Cys-57, Cys-73, Cys-114, Cys-117, Cys-120, Cys-124, Cys-144, Cys-147, Cys-150, and Cys-154. 2 consecutive 4Fe-4S ferredoxin-type domains span residues 105–134 and 135–164; these read KVAY…GSGK and LMHT…MLPV.

The protein belongs to the 4Fe4S bacterial-type ferredoxin family. RnfB subfamily. In terms of assembly, the complex is composed of six subunits: RnfA, RnfB, RnfC, RnfD, RnfE and RnfG. The cofactor is [4Fe-4S] cluster.

Its subcellular location is the cell inner membrane. Functionally, part of a membrane-bound complex that couples electron transfer with translocation of ions across the membrane. The chain is Ion-translocating oxidoreductase complex subunit B from Shewanella sediminis (strain HAW-EB3).